We begin with the raw amino-acid sequence, 190 residues long: ADP-ribosylation factor-like protein 6 (190 aa).

Residue glycine 2 is the site of N-myristoyl glycine attachment. GTP-binding positions include 24–31 (GLDNSGKT), 69–73 (DMAGQ), and 130–133 (NKMD).

It belongs to the small GTPase superfamily. Arf family. In terms of tissue distribution, specifically expressed in ciliated cells.

The protein localises to the cytoplasm. The protein is ADP-ribosylation factor-like protein 6 of Caenorhabditis elegans.